The chain runs to 97 residues: MANCIRRNALFFLTLLFLLSVSNLVQAARGGGKLKPQQCNSKCSFRCSATSHKKPCMFFCLKCCKKCLCVPPGTFGNKQTCPCYNNWKTKEGRPKCP.

Positions 1–27 (MANCIRRNALFFLTLLFLLSVSNLVQA) are cleaved as a signal peptide.

Belongs to the GASA family. Six disulfide bonds may be present. In terms of tissue distribution, expressed in roots, root hairs, vasculature of cotyledons and hypocotyls, shoot apex, leaf veins, stems, flower receptacles, pollen, filaments, anthers and siliques.

The protein resides in the secreted. It is found in the cell wall. It localises to the extracellular space. The protein localises to the extracellular matrix. In terms of biological role, gibberellin-regulated protein that acts as a negative regulator of gibberellin-induced flowering and stem growth. May inhibit flowering and inflorescence growth via a pathway involving GAI and by enhancing FLC expression and repressing FT and LFY. Acts as a negative regulator in thermotolerance by resogulating both salicylic acid (SA) signaling and heat shock-protein accumulation. The protein is Gibberellin-regulated protein 5 (GASA5) of Arabidopsis thaliana (Mouse-ear cress).